A 354-amino-acid polypeptide reads, in one-letter code: NAD-dependent protein deacetylase hst2-2 (354 aa).

The Deacetylase sirtuin-type domain maps to 16-279 (QCQNQTTLDS…REVARHLGWD (264 aa)). NAD(+) is bound by residues 43-63 (GAGL…TGLY) and 126-129 (QNID). The Proton acceptor role is filled by H146. Positions 154, 157, 178, and 183 each coordinate Zn(2+). NAD(+)-binding positions include 220 to 222 (GTS), 245 to 247 (NRE), and C265.

It belongs to the sirtuin family. Class I subfamily. Requires Zn(2+) as cofactor.

The protein resides in the nucleus. It carries out the reaction N(6)-acetyl-L-lysyl-[protein] + NAD(+) + H2O = 2''-O-acetyl-ADP-D-ribose + nicotinamide + L-lysyl-[protein]. Functionally, NAD-dependent histone deacetylase, which could function in telomeric silencing, cell cycle progression and chromosome stability. The chain is NAD-dependent protein deacetylase hst2-2 from Emericella nidulans (strain FGSC A4 / ATCC 38163 / CBS 112.46 / NRRL 194 / M139) (Aspergillus nidulans).